The following is a 159-amino-acid chain: Large ribosomal subunit protein uL11 (159 aa).

The protein belongs to the universal ribosomal protein uL11 family. In terms of assembly, part of the ribosomal stalk of the 50S ribosomal subunit. Interacts with L10 and the large rRNA to form the base of the stalk. L10 forms an elongated spine to which L12 dimers bind in a sequential fashion forming a multimeric L10(L12)X complex.

Forms part of the ribosomal stalk which helps the ribosome interact with GTP-bound translation factors. In Methanococcus vannielii (strain ATCC 35089 / DSM 1224 / JCM 13029 / OCM 148 / SB), this protein is Large ribosomal subunit protein uL11.